Reading from the N-terminus, the 102-residue chain is Aspartyl/glutamyl-tRNA(Asn/Gln) amidotransferase subunit C (102 aa).

The protein belongs to the GatC family. As to quaternary structure, heterotrimer of A, B and C subunits.

The enzyme catalyses L-glutamyl-tRNA(Gln) + L-glutamine + ATP + H2O = L-glutaminyl-tRNA(Gln) + L-glutamate + ADP + phosphate + H(+). The catalysed reaction is L-aspartyl-tRNA(Asn) + L-glutamine + ATP + H2O = L-asparaginyl-tRNA(Asn) + L-glutamate + ADP + phosphate + 2 H(+). Functionally, allows the formation of correctly charged Asn-tRNA(Asn) or Gln-tRNA(Gln) through the transamidation of misacylated Asp-tRNA(Asn) or Glu-tRNA(Gln) in organisms which lack either or both of asparaginyl-tRNA or glutaminyl-tRNA synthetases. The reaction takes place in the presence of glutamine and ATP through an activated phospho-Asp-tRNA(Asn) or phospho-Glu-tRNA(Gln). This chain is Aspartyl/glutamyl-tRNA(Asn/Gln) amidotransferase subunit C, found in Mycobacteroides abscessus (strain ATCC 19977 / DSM 44196 / CCUG 20993 / CIP 104536 / JCM 13569 / NCTC 13031 / TMC 1543 / L948) (Mycobacterium abscessus).